Here is a 90-residue protein sequence, read N- to C-terminus: Small ribosomal subunit protein bS16 (90 aa).

Belongs to the bacterial ribosomal protein bS16 family.

The protein is Small ribosomal subunit protein bS16 of Clostridioides difficile (strain 630) (Peptoclostridium difficile).